A 102-amino-acid chain; its full sequence is Small ribosomal subunit protein uS10 (102 aa).

This sequence belongs to the universal ribosomal protein uS10 family. In terms of assembly, part of the 30S ribosomal subunit.

In terms of biological role, involved in the binding of tRNA to the ribosomes. This is Small ribosomal subunit protein uS10 from Staphylococcus aureus (strain JH9).